The following is a 249-amino-acid chain: 1-(5-phosphoribosyl)-5-[(5-phosphoribosylamino)methylideneamino] imidazole-4-carboxamide isomerase (249 aa).

Aspartate 8 serves as the catalytic Proton acceptor. The Proton donor role is filled by aspartate 131.

Belongs to the HisA/HisF family.

It is found in the cytoplasm. The catalysed reaction is 1-(5-phospho-beta-D-ribosyl)-5-[(5-phospho-beta-D-ribosylamino)methylideneamino]imidazole-4-carboxamide = 5-[(5-phospho-1-deoxy-D-ribulos-1-ylimino)methylamino]-1-(5-phospho-beta-D-ribosyl)imidazole-4-carboxamide. It functions in the pathway amino-acid biosynthesis; L-histidine biosynthesis; L-histidine from 5-phospho-alpha-D-ribose 1-diphosphate: step 4/9. This is 1-(5-phosphoribosyl)-5-[(5-phosphoribosylamino)methylideneamino] imidazole-4-carboxamide isomerase from Leptothrix cholodnii (strain ATCC 51168 / LMG 8142 / SP-6) (Leptothrix discophora (strain SP-6)).